Consider the following 246-residue polypeptide: Putative F-box/LRR-repeat protein 9 (246 aa).

The F-box domain maps to 18 to 65; sequence YRNWAELPPELTSSILLRLGAIEILQNAQRVCKSWRRVCQDPSMWRKI.

In Arabidopsis thaliana (Mouse-ear cress), this protein is Putative F-box/LRR-repeat protein 9 (FBL9).